Consider the following 348-residue polypeptide: MSVDQEKLKALNEALGKIEKDFGKGSVMKLGEATSMSIDVISTGAIGLDIAIGIGGLPRGRIVEVYGPESSGKTTVALSCVASAQKDGGIAAFIDAEHALDPVYAKALGVDVDNLIISQPDTGEQALEIAEALIRSGAIDIIVIDSVAALVPKAEIDGDMGDSHVGLQARLMSQALRKLTGSIKKSNCVAIFINQLREKVGIMFGNPETTTGGRALKFYSSVRLDVRKIDTIKQGDKVIGSRTRVKVVKNKVAPPFKQAEFDIMYGEGISKIGDLLDIAADVDIVKKSGSWYSYNDTKLGQGRENVKKFLEDNLDLTTEIDEKVRAFYNLNEEHEESGTSVSKEIVEE.

G67 to T74 is an ATP binding site.

Belongs to the RecA family.

The protein localises to the cytoplasm. Functionally, can catalyze the hydrolysis of ATP in the presence of single-stranded DNA, the ATP-dependent uptake of single-stranded DNA by duplex DNA, and the ATP-dependent hybridization of homologous single-stranded DNAs. It interacts with LexA causing its activation and leading to its autocatalytic cleavage. The polypeptide is Protein RecA (Clostridioides difficile (strain 630) (Peptoclostridium difficile)).